Consider the following 216-residue polypeptide: Probable ubiquitin-conjugating enzyme E2 ECU01_1010 (216 aa).

Residues 1-10 (MFKPSAHRRL) show a composition bias toward basic residues. A disordered region spans residues 1-29 (MFKPSAHRRLPREDDIIQEDDEDGPLWPS). Residues 29–196 (SALRRLSNEE…VIRIAREEDE (168 aa)) enclose the UBC core domain. The active-site Glycyl thioester intermediate is the cysteine 120.

The protein belongs to the ubiquitin-conjugating enzyme family.

It carries out the reaction S-ubiquitinyl-[E1 ubiquitin-activating enzyme]-L-cysteine + [E2 ubiquitin-conjugating enzyme]-L-cysteine = [E1 ubiquitin-activating enzyme]-L-cysteine + S-ubiquitinyl-[E2 ubiquitin-conjugating enzyme]-L-cysteine.. Its pathway is protein modification; protein ubiquitination. In terms of biological role, catalyzes the covalent attachment of ubiquitin to other proteins so as to signal them for selective protein degradation. Involved in the formation of multiubiquitin chains. This Encephalitozoon cuniculi (strain GB-M1) (Microsporidian parasite) protein is Probable ubiquitin-conjugating enzyme E2 ECU01_1010.